A 79-amino-acid polypeptide reads, in one-letter code: Ornithine decarboxylase (79 aa).

Residues serine 8, glycine 45, and 75–78 (EPGR) each bind pyridoxal 5'-phosphate.

The protein belongs to the Orn/Lys/Arg decarboxylase class-II family. As to quaternary structure, homodimer. Only the dimer is catalytically active, as the active sites are constructed of residues from both monomers. Pyridoxal 5'-phosphate serves as cofactor.

Its subcellular location is the cytoplasm. It catalyses the reaction L-ornithine + H(+) = putrescine + CO2. Its pathway is amine and polyamine biosynthesis; putrescine biosynthesis via L-ornithine pathway; putrescine from L-ornithine: step 1/1. Inhibited by antizyme (AZ) OAZ1 in response to polyamine levels. AZ inhibits the assembly of the functional homodimer by binding to ODC monomers and targeting them for ubiquitin-independent proteolytic destruction by the 26S proteasome. Its function is as follows. Catalyzes the first and rate-limiting step of polyamine biosynthesis that converts ornithine into putrescine, which is the precursor for the polyamines, spermidine and spermine. Polyamines are essential for cell proliferation and are implicated in cellular processes, ranging from DNA replication to apoptosis. In Paracoccidioides brasiliensis, this protein is Ornithine decarboxylase (ODC).